A 539-amino-acid chain; its full sequence is Chaperonin GroEL (539 aa).

ATP is bound by residues 30–33, Lys-51, 87–91, Gly-415, 479–481, and Asp-495; these read TLGP, DGTTT, and NAA.

This sequence belongs to the chaperonin (HSP60) family. As to quaternary structure, forms a cylinder of 14 subunits composed of two heptameric rings stacked back-to-back. Interacts with the co-chaperonin GroES.

Its subcellular location is the cytoplasm. The catalysed reaction is ATP + H2O + a folded polypeptide = ADP + phosphate + an unfolded polypeptide.. Functionally, together with its co-chaperonin GroES, plays an essential role in assisting protein folding. The GroEL-GroES system forms a nano-cage that allows encapsulation of the non-native substrate proteins and provides a physical environment optimized to promote and accelerate protein folding. This Kluyvera intermedia (Enterobacter intermedius) protein is Chaperonin GroEL.